The sequence spans 475 residues: uncharacterized protein (475 aa).

The stretch at 185-244 (EISVSAISEQLASLMERVDKLEKMNAALEEENKQLKKEREATIKSVKKEAKKIKQEKPQI) forms a coiled coil.

This is an uncharacterized protein from Nora virus.